We begin with the raw amino-acid sequence, 91 residues long: Cytochrome b-c1 complex subunit 6, mitochondrial (91 aa).

Basic and acidic residues predominate over residues 1 to 10 (MGLEDERKML). A mitochondrion-targeting transit peptide spans 1–13 (MGLEDERKMLTES). The tract at residues 1 to 30 (MGLEDERKMLTESGDPEKEEEEEEELVDPL) is disordered. Positions 17 to 27 (EKEEEEEEELV) are enriched in acidic residues. Cystine bridges form between C37-C81 and C53-C67. An N6-acetyllysine modification is found at K42. N6-acetyllysine is present on K85.

Belongs to the UQCRH/QCR6 family. As to quaternary structure, component of the ubiquinol-cytochrome c oxidoreductase (cytochrome b-c1 complex, complex III, CIII), a multisubunit enzyme composed of 11 subunits. The complex is composed of 3 respiratory subunits cytochrome b, cytochrome c1 and Rieske protein UQCRFS1, 2 core protein subunits UQCRC1/QCR1 and UQCRC2/QCR2, and 6 low-molecular weight protein subunits UQCRH/QCR6, UQCRB/QCR7, UQCRQ/QCR8, UQCR10/QCR9, UQCR11/QCR10 and subunit 9, the cleavage product of Rieske protein UQCRFS1. The complex exists as an obligatory dimer and forms supercomplexes (SCs) in the inner mitochondrial membrane with NADH-ubiquinone oxidoreductase (complex I, CI) and cytochrome c oxidase (complex IV, CIV), resulting in different assemblies (supercomplex SCI(1)III(2)IV(1) and megacomplex MCI(2)III(2)IV(2)).

It localises to the mitochondrion inner membrane. Its function is as follows. Component of the ubiquinol-cytochrome c oxidoreductase, a multisubunit transmembrane complex that is part of the mitochondrial electron transport chain which drives oxidative phosphorylation. The respiratory chain contains 3 multisubunit complexes succinate dehydrogenase (complex II, CII), ubiquinol-cytochrome c oxidoreductase (cytochrome b-c1 complex, complex III, CIII) and cytochrome c oxidase (complex IV, CIV), that cooperate to transfer electrons derived from NADH and succinate to molecular oxygen, creating an electrochemical gradient over the inner membrane that drives transmembrane transport and the ATP synthase. The cytochrome b-c1 complex catalyzes electron transfer from ubiquinol to cytochrome c, linking this redox reaction to translocation of protons across the mitochondrial inner membrane, with protons being carried across the membrane as hydrogens on the quinol. In the process called Q cycle, 2 protons are consumed from the matrix, 4 protons are released into the intermembrane space and 2 electrons are passed to cytochrome c. In Macaca fascicularis (Crab-eating macaque), this protein is Cytochrome b-c1 complex subunit 6, mitochondrial (UQCRH).